Here is a 68-residue protein sequence, read N- to C-terminus: Protein SlyX homolog (68 aa).

Belongs to the SlyX family.

The chain is Protein SlyX homolog from Brucella melitensis biotype 1 (strain ATCC 23456 / CCUG 17765 / NCTC 10094 / 16M).